We begin with the raw amino-acid sequence, 85 residues long: Small ribosomal subunit protein bS18 (85 aa).

The protein belongs to the bacterial ribosomal protein bS18 family. As to quaternary structure, part of the 30S ribosomal subunit. Forms a tight heterodimer with protein bS6.

In terms of biological role, binds as a heterodimer with protein bS6 to the central domain of the 16S rRNA, where it helps stabilize the platform of the 30S subunit. The polypeptide is Small ribosomal subunit protein bS18 (Hamiltonella defensa subsp. Acyrthosiphon pisum (strain 5AT)).